Consider the following 879-residue polypeptide: Alanine--tRNA ligase (879 aa).

Zn(2+) contacts are provided by His-566, His-570, Cys-668, and His-672.

Belongs to the class-II aminoacyl-tRNA synthetase family. Zn(2+) serves as cofactor.

The protein localises to the cytoplasm. It carries out the reaction tRNA(Ala) + L-alanine + ATP = L-alanyl-tRNA(Ala) + AMP + diphosphate. Functionally, catalyzes the attachment of alanine to tRNA(Ala) in a two-step reaction: alanine is first activated by ATP to form Ala-AMP and then transferred to the acceptor end of tRNA(Ala). Also edits incorrectly charged Ser-tRNA(Ala) and Gly-tRNA(Ala) via its editing domain. In Clostridium kluyveri (strain ATCC 8527 / DSM 555 / NBRC 12016 / NCIMB 10680 / K1), this protein is Alanine--tRNA ligase.